The sequence spans 364 residues: Aminomethyltransferase (364 aa).

The protein belongs to the GcvT family. As to quaternary structure, the glycine cleavage system is composed of four proteins: P, T, L and H.

It carries out the reaction N(6)-[(R)-S(8)-aminomethyldihydrolipoyl]-L-lysyl-[protein] + (6S)-5,6,7,8-tetrahydrofolate = N(6)-[(R)-dihydrolipoyl]-L-lysyl-[protein] + (6R)-5,10-methylene-5,6,7,8-tetrahydrofolate + NH4(+). Functionally, the glycine cleavage system catalyzes the degradation of glycine. The polypeptide is Aminomethyltransferase (Shewanella oneidensis (strain ATCC 700550 / JCM 31522 / CIP 106686 / LMG 19005 / NCIMB 14063 / MR-1)).